The following is a 342-amino-acid chain: L-threonine 3-dehydrogenase (342 aa).

Cys-38 is a Zn(2+) binding site. Catalysis depends on charge relay system residues Thr-40 and His-43. Zn(2+)-binding residues include His-63, Glu-64, Cys-93, Cys-96, Cys-99, and Cys-107. Residues Ile-175, Asp-195, Arg-200, 262 to 264 (LGI), and 286 to 287 (IY) each bind NAD(+).

It belongs to the zinc-containing alcohol dehydrogenase family. Homotetramer. Requires Zn(2+) as cofactor.

The protein localises to the cytoplasm. It carries out the reaction L-threonine + NAD(+) = (2S)-2-amino-3-oxobutanoate + NADH + H(+). Its pathway is amino-acid degradation; L-threonine degradation via oxydo-reductase pathway; glycine from L-threonine: step 1/2. Catalyzes the NAD(+)-dependent oxidation of L-threonine to 2-amino-3-ketobutyrate. The polypeptide is L-threonine 3-dehydrogenase (Aeromonas hydrophila subsp. hydrophila (strain ATCC 7966 / DSM 30187 / BCRC 13018 / CCUG 14551 / JCM 1027 / KCTC 2358 / NCIMB 9240 / NCTC 8049)).